The following is a 299-amino-acid chain: GTPase Era (299 aa).

The region spanning 5–172 (KSGFVSIIGR…IDVLKTYLPE (168 aa)) is the Era-type G domain. The G1 stretch occupies residues 13 to 20 (GRPNVGKS). 13 to 20 (GRPNVGKS) provides a ligand contact to GTP. Residues 39-43 (QTTRN) are G2. The G3 stretch occupies residues 60–63 (DTPG). Residues 60–64 (DTPGI) and 122–125 (NKID) each bind GTP. The tract at residues 122–125 (NKID) is G4. Positions 151 to 153 (ISA) are G5. The 78-residue stretch at 203 to 280 (TSEEIPHAIG…YLELWVKVQK (78 aa)) folds into the KH type-2 domain.

This sequence belongs to the TRAFAC class TrmE-Era-EngA-EngB-Septin-like GTPase superfamily. Era GTPase family. Monomer.

Its subcellular location is the cytoplasm. It is found in the cell membrane. In terms of biological role, an essential GTPase that binds both GDP and GTP, with rapid nucleotide exchange. Plays a role in 16S rRNA processing and 30S ribosomal subunit biogenesis and possibly also in cell cycle regulation and energy metabolism. The polypeptide is GTPase Era (Staphylococcus haemolyticus (strain JCSC1435)).